The sequence spans 202 residues: Peptidyl-tRNA hydrolase (202 aa).

Tyr16 provides a ligand contact to tRNA. His21 (proton acceptor) is an active-site residue. Residues Tyr68, Asn70, and Asn116 each contribute to the tRNA site.

This sequence belongs to the PTH family. Monomer.

It is found in the cytoplasm. It carries out the reaction an N-acyl-L-alpha-aminoacyl-tRNA + H2O = an N-acyl-L-amino acid + a tRNA + H(+). Functionally, hydrolyzes ribosome-free peptidyl-tRNAs (with 1 or more amino acids incorporated), which drop off the ribosome during protein synthesis, or as a result of ribosome stalling. In terms of biological role, catalyzes the release of premature peptidyl moieties from peptidyl-tRNA molecules trapped in stalled 50S ribosomal subunits, and thus maintains levels of free tRNAs and 50S ribosomes. In Treponema pallidum (strain Nichols), this protein is Peptidyl-tRNA hydrolase.